A 553-amino-acid polypeptide reads, in one-letter code: Methyl-coenzyme M reductase II subunit alpha (553 aa).

Position 150 (Q150) interacts with coenzyme F430. Coenzyme B contacts are provided by residues R228, 259–260 (KH), and R273. A Pros-methylhistidine modification is found at H260. R274 is subject to 5-methylarginine. Y335 is a binding site for coenzyme M. Q402 is subject to 2-methylglutamine. Coenzyme M is bound at residue Y446. Residue G447 is modified to 1-thioglycine. A (Z)-2,3-didehydroaspartate modification is found at D452. C454 carries the post-translational modification S-methylcysteine.

Belongs to the methyl-coenzyme M reductase alpha subunit family. In terms of assembly, MCR is a hexamer of two alpha, two beta, and two gamma chains, forming a dimer of heterotrimers. Coenzyme F430 serves as cofactor. The alpha subunit contains six modified amino acids near the active site region. Is methylated on His-260, Arg-274, Gln-402 and Cys-454, probably by the action of specific S-adenosylmethionine-dependent methyltransferases. Also contains a thioglycine at position 447, forming a thiopeptide bond. Contains a didehydroaspartate residue at position 452. The methylation on C5 of Arg-274 is a post-translational methylation not essential in vivo, but which plays a role for the stability and structural integrity of MCR.

The enzyme catalyses coenzyme B + methyl-coenzyme M = methane + coenzyme M-coenzyme B heterodisulfide. Its pathway is one-carbon metabolism; methyl-coenzyme M reduction; methane from methyl-coenzyme M: step 1/1. In terms of biological role, component of the methyl-coenzyme M reductase (MCR) I that catalyzes the reductive cleavage of methyl-coenzyme M (CoM-S-CH3 or 2-(methylthio)ethanesulfonate) using coenzyme B (CoB or 7-mercaptoheptanoylthreonine phosphate) as reductant which results in the production of methane and the mixed heterodisulfide of CoB and CoM (CoM-S-S-CoB). This is the final step in methanogenesis. In Methanothermobacter thermautotrophicus (strain ATCC 29096 / DSM 1053 / JCM 10044 / NBRC 100330 / Delta H) (Methanobacterium thermoautotrophicum), this protein is Methyl-coenzyme M reductase II subunit alpha (mrtA).